The following is a 249-amino-acid chain: tRNA (guanine-N(1)-)-methyltransferase (249 aa).

S-adenosyl-L-methionine-binding positions include Gly113 and 133–138 (IGDYVL).

It belongs to the RNA methyltransferase TrmD family. As to quaternary structure, homodimer.

The protein localises to the cytoplasm. It catalyses the reaction guanosine(37) in tRNA + S-adenosyl-L-methionine = N(1)-methylguanosine(37) in tRNA + S-adenosyl-L-homocysteine + H(+). In terms of biological role, specifically methylates guanosine-37 in various tRNAs. This Aeromonas hydrophila subsp. hydrophila (strain ATCC 7966 / DSM 30187 / BCRC 13018 / CCUG 14551 / JCM 1027 / KCTC 2358 / NCIMB 9240 / NCTC 8049) protein is tRNA (guanine-N(1)-)-methyltransferase.